A 268-amino-acid chain; its full sequence is Urease accessory protein UreD (268 aa).

This sequence belongs to the UreD family. In terms of assembly, ureD, UreF and UreG form a complex that acts as a GTP-hydrolysis-dependent molecular chaperone, activating the urease apoprotein by helping to assemble the nickel containing metallocenter of UreC. The UreE protein probably delivers the nickel.

Its subcellular location is the cytoplasm. Required for maturation of urease via the functional incorporation of the urease nickel metallocenter. The protein is Urease accessory protein UreD of Lysinibacillus sphaericus (strain C3-41).